A 431-amino-acid polypeptide reads, in one-letter code: Serine--tRNA ligase (431 aa).

238–240 (TAE) serves as a coordination point for L-serine. 269–271 (RSE) serves as a coordination point for ATP. Residue glutamate 292 coordinates L-serine. 356–359 (EISS) lines the ATP pocket. Serine 392 lines the L-serine pocket.

This sequence belongs to the class-II aminoacyl-tRNA synthetase family. Type-1 seryl-tRNA synthetase subfamily. In terms of assembly, homodimer. The tRNA molecule binds across the dimer.

The protein localises to the cytoplasm. The catalysed reaction is tRNA(Ser) + L-serine + ATP = L-seryl-tRNA(Ser) + AMP + diphosphate + H(+). It catalyses the reaction tRNA(Sec) + L-serine + ATP = L-seryl-tRNA(Sec) + AMP + diphosphate + H(+). Its pathway is aminoacyl-tRNA biosynthesis; selenocysteinyl-tRNA(Sec) biosynthesis; L-seryl-tRNA(Sec) from L-serine and tRNA(Sec): step 1/1. Its function is as follows. Catalyzes the attachment of serine to tRNA(Ser). Is also able to aminoacylate tRNA(Sec) with serine, to form the misacylated tRNA L-seryl-tRNA(Sec), which will be further converted into selenocysteinyl-tRNA(Sec). The protein is Serine--tRNA ligase of Pectobacterium atrosepticum (strain SCRI 1043 / ATCC BAA-672) (Erwinia carotovora subsp. atroseptica).